The chain runs to 226 residues: Flagellar L-ring protein (226 aa).

The signal sequence occupies residues 1–15; sequence MKRLAVSILCLALAG. Cysteine 16 is lipidated: N-palmitoyl cysteine. Residue cysteine 16 is the site of S-diacylglycerol cysteine attachment.

It belongs to the FlgH family. In terms of assembly, the basal body constitutes a major portion of the flagellar organelle and consists of four rings (L,P,S, and M) mounted on a central rod.

The protein localises to the cell outer membrane. The protein resides in the bacterial flagellum basal body. In terms of biological role, assembles around the rod to form the L-ring and probably protects the motor/basal body from shearing forces during rotation. In Geobacter metallireducens (strain ATCC 53774 / DSM 7210 / GS-15), this protein is Flagellar L-ring protein.